The chain runs to 457 residues: Flavohemoprotein-1 (457 aa).

The region spanning 2–157 is the Globin domain; that stretch reads ALSEDTIKAV…LADLLIKREE (156 aa). Residue His106 participates in heme b binding. Residues Tyr116 and Glu156 each act as charge relay system in the active site. Positions 168–456 are reductase; that stretch reads GGWRQTRTFR…FEMFGPFKAS (289 aa). An FAD-binding FR-type domain is found at 171-278; the sequence is RQTRTFRVEE…APPYGDFFLR (108 aa). FAD is bound by residues Tyr210 and 227 to 230; that span reads RQYS. 320 to 325 lines the NADP(+) pocket; sequence GIGQTP. Residue 449–452 participates in FAD binding; it reads MFGP.

The protein belongs to the globin family. Two-domain flavohemoproteins subfamily. This sequence in the C-terminal section; belongs to the flavoprotein pyridine nucleotide cytochrome reductase family. In terms of assembly, monomer. Heme b serves as cofactor. It depends on FAD as a cofactor.

It catalyses the reaction 2 nitric oxide + NADPH + 2 O2 = 2 nitrate + NADP(+) + H(+). It carries out the reaction 2 nitric oxide + NADH + 2 O2 = 2 nitrate + NAD(+) + H(+). In terms of biological role, flavohemoprotein involved in nitric oxide (NO) detoxification in an aerobic process, termed nitric oxide dioxygenase (NOD) reaction that utilizes O(2) and NAD(P)H to convert NO to nitrate, which protects the protozoan parasite from various noxious nitrogen compounds. Therefore, plays a central role in the inducible response to nitrosative stress. May also be involved in O(2) detoxification. The sequence is that of Flavohemoprotein-1 (hmpA-1) from Giardia intestinalis (strain P15) (Giardia lamblia).